Consider the following 331-residue polypeptide: 6-phosphogluconolactonase (331 aa).

An N6-acetyllysine modification is found at Lys-287.

It belongs to the cycloisomerase 2 family.

It carries out the reaction 6-phospho-D-glucono-1,5-lactone + H2O = 6-phospho-D-gluconate + H(+). It participates in carbohydrate degradation; pentose phosphate pathway; D-ribulose 5-phosphate from D-glucose 6-phosphate (oxidative stage): step 2/3. In terms of biological role, catalyzes the hydrolysis of 6-phosphogluconolactone to 6-phosphogluconate. The sequence is that of 6-phosphogluconolactonase from Escherichia coli O7:K1 (strain IAI39 / ExPEC).